A 754-amino-acid chain; its full sequence is Aspartyl/asparaginyl beta-hydroxylase (754 aa).

Residues 1–48 (MAPRKNAKGGGGNSSSSSSGSPTGCTSGGSSSPGARRETKQGGLKNGR) form a disordered region. Topologically, residues 1-56 (MAPRKNAKGGGGNSSSSSSGSPTGCTSGGSSSPGARRETKQGGLKNGRKGGLSGSS) are cytoplasmic. A compositionally biased stretch (low complexity) spans 14–34 (SSSSSSGSPTGCTSGGSSSPG). Position 15 is a phosphoserine (serine 15). The helical; Signal-anchor for type II membrane protein transmembrane segment at 57-77 (FFTWFMVIALLGVWTSVAVVW) threads the bilayer. The Lumenal segment spans residues 78–754 (FDLVDYEEVL…PHQRRSLPAI (677 aa)). An N-linked (GlcNAc...) asparagine glycan is attached at asparagine 96. Ca(2+)-binding residues include aspartate 109, aspartate 111, aspartate 113, aspartate 115, and aspartate 120. Disordered stretches follow at residues 176 to 197 (VYSE…ELQP) and 247 to 326 (EQEN…KKKK). Composition is skewed to basic and acidic residues over residues 261-284 (DAER…DHAV) and 309-318 (TNKKADEPGK). 5 TPR repeats span residues 337-370 (IKAE…YPQS), 378-411 (AQCE…PDAP), 450-483 (TALK…TPND), 485-517 (FAKV…GDPG), and 521-553 (GRFY…GHFA). N-linked (GlcNAc...) asparagine glycosylation occurs at asparagine 466. Position 621 (tryptophan 621) interacts with 2-oxoglutarate. A disulfide bond links cysteine 637 and cysteine 644. Serine 664 lines the 2-oxoglutarate pocket. Histidine 675 lines the Fe cation pocket. 684–686 (RMH) is a 2-oxoglutarate binding site. Asparagine 702 is a glycosylation site (N-linked (GlcNAc...) asparagine). Histidine 721 contacts Fe cation. Arginine 731 provides a ligand contact to 2-oxoglutarate.

This sequence belongs to the aspartyl/asparaginyl beta-hydroxylase family. Monomer. Fe cation serves as cofactor. Might be processed to the 56 kDa (AA 289-754) or 52 kDa (AA 311-754) forms in the lumen of the endoplasmic reticulum.

It is found in the endoplasmic reticulum membrane. It carries out the reaction L-aspartyl-[protein] + 2-oxoglutarate + O2 = 3-hydroxy-L-aspartyl-[protein] + succinate + CO2. Functionally, specifically hydroxylates an Asp or Asn residue in certain epidermal growth factor-like (EGF) domains of a number of proteins. The polypeptide is Aspartyl/asparaginyl beta-hydroxylase (ASPH) (Bos taurus (Bovine)).